A 930-amino-acid chain; its full sequence is Probable SapB synthase (930 aa).

The Protein kinase domain occupies 256 to 516 (YTVESALHFS…GSTRADETTR (261 aa)). ATP contacts are provided by residues 262 to 270 (LHFSNGGGV) and Lys285. Catalysis depends on Asp395, which acts as the Proton acceptor. The chain crosses the membrane as a helical span at residues 447–467 (YALACLRIVLFLPLTSLLAVD). Basic and acidic residues predominate over residues 501–527 (GSTRVDGSTRADETTRADETTRLDVTT). Disordered stretches follow at residues 501-558 (GSTR…RDSM) and 911-930 (PFLP…HQEP). The span at 532 to 546 (APDAARRPAGPVAPV) shows a compositional bias: low complexity. The span at 547–556 (RPDDWPRSRD) shows a compositional bias: basic and acidic residues.

In the N-terminal section; belongs to the protein kinase superfamily.

It localises to the cell membrane. Functionally, required for aerial hyphae formation. Probably involved in processing the precursor of SapB to its mature form. The protein is Probable SapB synthase of Streptomyces coelicolor (strain ATCC BAA-471 / A3(2) / M145).